We begin with the raw amino-acid sequence, 614 residues long: Dihydroxy-acid dehydratase (614 aa).

Mg(2+) is bound at residue Asp-81. [2Fe-2S] cluster is bound at residue Cys-122. Mg(2+)-binding residues include Asp-123 and Lys-124. Lys-124 carries the N6-carboxylysine modification. Cys-193 contacts [2Fe-2S] cluster. Glu-489 lines the Mg(2+) pocket. Ser-515 functions as the Proton acceptor in the catalytic mechanism.

This sequence belongs to the IlvD/Edd family. As to quaternary structure, homodimer. [2Fe-2S] cluster is required as a cofactor. It depends on Mg(2+) as a cofactor.

It carries out the reaction (2R)-2,3-dihydroxy-3-methylbutanoate = 3-methyl-2-oxobutanoate + H2O. The catalysed reaction is (2R,3R)-2,3-dihydroxy-3-methylpentanoate = (S)-3-methyl-2-oxopentanoate + H2O. It participates in amino-acid biosynthesis; L-isoleucine biosynthesis; L-isoleucine from 2-oxobutanoate: step 3/4. It functions in the pathway amino-acid biosynthesis; L-valine biosynthesis; L-valine from pyruvate: step 3/4. Functionally, functions in the biosynthesis of branched-chain amino acids. Catalyzes the dehydration of (2R,3R)-2,3-dihydroxy-3-methylpentanoate (2,3-dihydroxy-3-methylvalerate) into 2-oxo-3-methylpentanoate (2-oxo-3-methylvalerate) and of (2R)-2,3-dihydroxy-3-methylbutanoate (2,3-dihydroxyisovalerate) into 2-oxo-3-methylbutanoate (2-oxoisovalerate), the penultimate precursor to L-isoleucine and L-valine, respectively. This chain is Dihydroxy-acid dehydratase, found in Hahella chejuensis (strain KCTC 2396).